The primary structure comprises 411 residues: LL-diaminopimelate aminotransferase (411 aa).

Residues Tyr15 and Gly42 each contribute to the substrate site. Residues Tyr72, 108 to 109 (SK), Tyr132, Asn187, Tyr218, and 246 to 248 (SFS) contribute to the pyridoxal 5'-phosphate site. Residues Lys109, Tyr132, and Asn187 each coordinate substrate. An N6-(pyridoxal phosphate)lysine modification is found at Lys249. 2 residues coordinate pyridoxal 5'-phosphate: Arg257 and Asn292. Residues Asn292 and Arg388 each coordinate substrate.

The protein belongs to the class-I pyridoxal-phosphate-dependent aminotransferase family. LL-diaminopimelate aminotransferase subfamily. As to quaternary structure, homodimer. The cofactor is pyridoxal 5'-phosphate.

It carries out the reaction (2S,6S)-2,6-diaminopimelate + 2-oxoglutarate = (S)-2,3,4,5-tetrahydrodipicolinate + L-glutamate + H2O + H(+). It participates in amino-acid biosynthesis; L-lysine biosynthesis via DAP pathway; LL-2,6-diaminopimelate from (S)-tetrahydrodipicolinate (aminotransferase route): step 1/1. In terms of biological role, involved in the synthesis of meso-diaminopimelate (m-DAP or DL-DAP), required for both lysine and peptidoglycan biosynthesis. Catalyzes the direct conversion of tetrahydrodipicolinate to LL-diaminopimelate. This chain is LL-diaminopimelate aminotransferase, found in Citrifermentans bemidjiense (strain ATCC BAA-1014 / DSM 16622 / JCM 12645 / Bem) (Geobacter bemidjiensis).